The following is a 357-amino-acid chain: Ferrochelatase (357 aa).

Positions 193 and 272 each coordinate Fe cation.

The protein belongs to the ferrochelatase family.

It is found in the cytoplasm. It carries out the reaction heme b + 2 H(+) = protoporphyrin IX + Fe(2+). It participates in porphyrin-containing compound metabolism; protoheme biosynthesis; protoheme from protoporphyrin-IX: step 1/1. In terms of biological role, catalyzes the ferrous insertion into protoporphyrin IX. The protein is Ferrochelatase of Hyphomonas neptunium (strain ATCC 15444).